The chain runs to 793 residues: DnaJ homolog subfamily C member 10 (793 aa).

The first 32 residues, 1–32, serve as a signal peptide directing secretion; the sequence is MGVWLNRDEFIRDVKRISLCLLVLYVVIVVGT. The region spanning 35 to 100 is the J domain; sequence NFYSLLGVSK…DLRKKYDKYG (66 aa). The Thioredoxin 1 domain maps to 130 to 232; it reads EIITLERREF…ESLVSFAMQH (103 aa). Cysteine 158 and cysteine 161 are oxidised to a cystine. 2 trxb regions span residues 235 to 350 and 348 to 463; these read TTVT…LPDF and PDFE…PQNF. Thioredoxin domains are found at residues 454–553, 557–665, and 671–776; these read HVTT…IEDL, SVVS…SWGL, and ASID…ALIY. Residues cysteine 480 and cysteine 483 are joined by a disulfide bond. Asparagine 530 carries an N-linked (GlcNAc...) asparagine glycan. Disulfide bonds link cysteine 588/cysteine 591 and cysteine 700/cysteine 703. Positions 790–793 match the Prevents secretion from ER motif; the sequence is KDEL.

As to quaternary structure, interacts with HSPA5 (via its J domain). Interacts with EDEM1.

Its subcellular location is the endoplasmic reticulum lumen. In terms of biological role, endoplasmic reticulum disulfide reductase involved both in the correct folding of proteins and degradation of misfolded proteins. Required for efficient folding of proteins in the endoplasmic reticulum by catalyzing the removal of non-native disulfide bonds formed during the folding of proteins, such as LDLR. Also involved in endoplasmic reticulum-associated degradation (ERAD) by reducing incorrect disulfide bonds in misfolded glycoproteins recognized by EDEM1. Interaction with HSPA5 is required its activity, not for the disulfide reductase activity, but to facilitate the release of DNAJC10 from its substrate. Promotes apoptotic signaling pathway in response to endoplasmic reticulum stress. The polypeptide is DnaJ homolog subfamily C member 10 (Dnajc10) (Rattus norvegicus (Rat)).